Reading from the N-terminus, the 1433-residue chain is DNA-directed RNA polymerase subunit beta' (1433 aa).

Zn(2+)-binding residues include Cys66, Cys68, Cys81, and Cys84. Residues 328–347 form a disordered region; that stretch reads RKSSAVKTDSNRPLKSLSDS. Residues 329–346 show a composition bias toward polar residues; the sequence is KSSAVKTDSNRPLKSLSD. Residues Asp477, Asp479, and Asp481 each coordinate Mg(2+). 4 residues coordinate Zn(2+): Cys825, Cys899, Cys906, and Cys909.

Belongs to the RNA polymerase beta' chain family. In terms of assembly, the RNAP catalytic core consists of 2 alpha, 1 beta, 1 beta' and 1 omega subunit. When a sigma factor is associated with the core the holoenzyme is formed, which can initiate transcription. It depends on Mg(2+) as a cofactor. The cofactor is Zn(2+).

The catalysed reaction is RNA(n) + a ribonucleoside 5'-triphosphate = RNA(n+1) + diphosphate. In terms of biological role, DNA-dependent RNA polymerase catalyzes the transcription of DNA into RNA using the four ribonucleoside triphosphates as substrates. This chain is DNA-directed RNA polymerase subunit beta', found in Christiangramia forsetii (strain DSM 17595 / CGMCC 1.15422 / KT0803) (Gramella forsetii).